Here is a 483-residue protein sequence, read N- to C-terminus: 23S rRNA (uracil(1939)-C(5))-methyltransferase RlmD (483 aa).

Basic residues predominate over residues 1 to 11 (MTGLGKRRPAR). Residues 1–36 (MTGLGKRRPARSRSGVSGLRERRQPASVERSAGSEG) form a disordered region. The 62-residue stretch at 29–90 (ERSAGSEGRR…KRFDEAHVSE (62 aa)) folds into the TRAM domain. Residues cysteine 103, cysteine 109, cysteine 112, and cysteine 189 each contribute to the [4Fe-4S] cluster site. Residues glutamine 298, phenylalanine 332, asparagine 337, glutamate 353, aspartate 379, and aspartate 401 each contribute to the S-adenosyl-L-methionine site. Catalysis depends on cysteine 427, which acts as the Nucleophile.

Belongs to the class I-like SAM-binding methyltransferase superfamily. RNA M5U methyltransferase family. RlmD subfamily.

The enzyme catalyses uridine(1939) in 23S rRNA + S-adenosyl-L-methionine = 5-methyluridine(1939) in 23S rRNA + S-adenosyl-L-homocysteine + H(+). In terms of biological role, catalyzes the formation of 5-methyl-uridine at position 1939 (m5U1939) in 23S rRNA. This is 23S rRNA (uracil(1939)-C(5))-methyltransferase RlmD from Halomonas elongata (strain ATCC 33173 / DSM 2581 / NBRC 15536 / NCIMB 2198 / 1H9).